The following is a 427-amino-acid chain: Glutamate-1-semialdehyde 2,1-aminomutase (427 aa).

Lys267 bears the N6-(pyridoxal phosphate)lysine mark.

This sequence belongs to the class-III pyridoxal-phosphate-dependent aminotransferase family. HemL subfamily. In terms of assembly, homodimer. It depends on pyridoxal 5'-phosphate as a cofactor.

The protein localises to the cytoplasm. The enzyme catalyses (S)-4-amino-5-oxopentanoate = 5-aminolevulinate. Its pathway is porphyrin-containing compound metabolism; protoporphyrin-IX biosynthesis; 5-aminolevulinate from L-glutamyl-tRNA(Glu): step 2/2. The polypeptide is Glutamate-1-semialdehyde 2,1-aminomutase (Thermodesulfovibrio yellowstonii (strain ATCC 51303 / DSM 11347 / YP87)).